The primary structure comprises 1047 residues: Atrial natriuretic peptide receptor 2 (1047 aa).

The N-terminal stretch at Met1–Ala22 is a signal peptide. Residues Arg23–Ile458 are Extracellular-facing. 2 N-linked (GlcNAc...) asparagine glycosylation sites follow: Asn24 and Asn35. Cys75 and Cys101 form a disulfide bridge. Residues Asn161, Asn195, Asn244, Asn277, and Asn349 are each glycosylated (N-linked (GlcNAc...) asparagine). The helical transmembrane segment at Val459–Phe478 threads the bilayer. Over Arg479–Leu1047 the chain is Cytoplasmic. Phosphoserine is present on Ser513. One can recognise a Protein kinase domain in the interval Ser513–Ile786. Phosphothreonine is present on Thr516. Ser518, Ser522, Ser523, and Ser526 each carry phosphoserine. Thr529 is modified (phosphothreonine). One can recognise a Guanylate cyclase domain in the interval Thr861–Glu991.

It belongs to the adenylyl cyclase class-4/guanylyl cyclase family. In terms of processing, phosphorylated. Phosphorylation of the protein kinase-like domain is required for full activation by CNP. Glycosylated.

Its subcellular location is the cell membrane. It catalyses the reaction GTP = 3',5'-cyclic GMP + diphosphate. Its function is as follows. Receptor for the C-type natriuretic peptide NPPC/CNP hormone. Has guanylate cyclase activity upon binding of its ligand. May play a role in the regulation of skeletal growth. The polypeptide is Atrial natriuretic peptide receptor 2 (NPR2) (Homo sapiens (Human)).